A 188-amino-acid chain; its full sequence is Sulfopyruvate decarboxylase subunit beta (188 aa).

Belongs to the TPP enzyme family. Heterododecamer composed of 6 subunits alpha and 6 subunits beta. Requires thiamine diphosphate as cofactor.

The enzyme catalyses 3-sulfopyruvate + H(+) = sulfoacetaldehyde + CO2. It participates in cofactor biosynthesis; coenzyme M biosynthesis; sulfoacetaldehyde from phosphoenolpyruvate and sulfite: step 4/4. Its activity is regulated as follows. Inhibited by oxygen when heated in air at 80 degrees Celsius. The enzyme is reactivated by addition of dithionite. Involved in the biosynthesis of the coenzyme M (2-mercaptoethanesulfonic acid). Catalyzes the decarboxylation of sulfopyruvate to sulfoacetaldehyde. The sequence is that of Sulfopyruvate decarboxylase subunit beta from Methanocaldococcus jannaschii (strain ATCC 43067 / DSM 2661 / JAL-1 / JCM 10045 / NBRC 100440) (Methanococcus jannaschii).